Here is a 381-residue protein sequence, read N- to C-terminus: tRNA pseudouridine synthase D (381 aa).

Catalysis depends on Asp-81, which acts as the Nucleophile. One can recognise a TRUD domain in the interval 160-335 (GMPNYFGSQR…TLGSRRFFWV (176 aa)).

Belongs to the pseudouridine synthase TruD family.

The enzyme catalyses uridine(13) in tRNA = pseudouridine(13) in tRNA. In terms of biological role, responsible for synthesis of pseudouridine from uracil-13 in transfer RNAs. The polypeptide is tRNA pseudouridine synthase D (Helicobacter pylori (strain HPAG1)).